Reading from the N-terminus, the 199-residue chain is Pectinesterase inhibitor 4 (199 aa).

The signal sequence occupies residues 1–25 (MLRFVVLSLTLMVFINSSNFPKTAA). N-linked (GlcNAc...) asparagine glycans are attached at residues Asn16, Asn33, Asn43, and Asn83. Cysteines 42 and 51 form a disulfide. Residues Cys109 and Cys158 are joined by a disulfide bond.

It belongs to the PMEI family. As to quaternary structure, binds reversibly to PME3 to inhibit its activity; the stability of the PME3-PMEI4 complex and the inhibition of the pectin methylesterase (PME) activity is pH-dependent, based on protonation status of amino-acids at the complex interface. In terms of tissue distribution, expressed in outer cell layer of roots, particularly in the root-hair zone. Expressed in roots and siliques.

It localises to the secreted. It is found in the extracellular space. The protein resides in the apoplast. Pectin methylesterase (PME) inhibitor that can target the root-expressed PME17 and PME3 in a pH-dependent manner, mainly in slightly acidic conditions (pH 6.3 and 5.0) but not at pH 7.5; this processus relies on changes in the protonation of amino acids involved in intermolecular and intramolecular interactions. Regulate de-methylesterification of pectins in roots and affects root growth. In Arabidopsis thaliana (Mouse-ear cress), this protein is Pectinesterase inhibitor 4.